The primary structure comprises 226 residues: V-type proton ATPase subunit E (226 aa).

This sequence belongs to the V-ATPase E subunit family. In terms of assembly, V-ATPase is a heteromultimeric enzyme made up of two complexes: the ATP-hydrolytic V1 complex and the proton translocation V0 complex. The V1 complex consists of three catalytic AB heterodimers that form a heterohexamer, three peripheral stalks each consisting of EG heterodimers, one central rotor including subunits D and F, and the regulatory subunits C and H. The proton translocation complex V0 consists of the proton transport subunit a, a ring of proteolipid subunits c9c'', rotary subunit d, subunits e and f, and the accessory subunits vah-19/Ac45 and vah-20/PRR. Expressed in the excretory cell and syncytial hypodermal cells (at protein level). Expressed in the intestine (at protein level).

It is found in the cytoplasm. The protein localises to the apical cell membrane. Functionally, subunit of the V1 complex of vacuolar(H+)-ATPase (V-ATPase), a multisubunit enzyme composed of a peripheral complex (V1) that hydrolyzes ATP and a membrane integral complex (V0) that translocates protons. V-ATPase is responsible for acidifying and maintaining the pH of intracellular compartments and in some cell types, is targeted to the plasma membrane, where it is responsible for acidifying the extracellular environment. Regulates pH homeostasis in the intestine. Probably by regulating cytoplasmic pH, required for cell survival in the intestine and hypodermis. Involved in receptor-mediated endocytosis. Involved in embryogenesis and larval development. In Caenorhabditis elegans, this protein is V-type proton ATPase subunit E.